The sequence spans 626 residues: Probable serine/threonine-protein kinase CCRP1 (626 aa).

The 256-residue stretch at 36–291 (YSKGRMLGKG…LDEILQHPFL (256 aa)) folds into the Protein kinase domain. ATP contacts are provided by residues 42–50 (LGKGGFAKC) and Lys-65. Ser-71 bears the Phosphoserine mark. The Proton acceptor role is filled by Asp-159. A disordered region spans residues 399-433 (NFTKTGSWQSNLNGTQSVKGSSRPQTVQQKGDLKS). The span at 400-427 (FTKTGSWQSNLNGTQSVKGSSRPQTVQQ) shows a compositional bias: polar residues. POLO box domains lie at 471–554 (WVKK…YLEG) and 574–626 (YVKK…PISP).

This sequence belongs to the protein kinase superfamily. Ser/Thr protein kinase family. CDC5/Polo subfamily. As to expression, embryo.

It carries out the reaction L-seryl-[protein] + ATP = O-phospho-L-seryl-[protein] + ADP + H(+). It catalyses the reaction L-threonyl-[protein] + ATP = O-phospho-L-threonyl-[protein] + ADP + H(+). In terms of biological role, may play a role in the division of some cell types. This chain is Probable serine/threonine-protein kinase CCRP1 (CCRP1), found in Zea mays (Maize).